We begin with the raw amino-acid sequence, 740 residues long: Vertnin (740 aa).

Disordered stretches follow at residues 485–506, 560–616, and 653–673; these read EAGE…RGLI, PGMQ…DQNV, and TQSQ…APGG. Over residues 578–604 the composition is skewed to basic and acidic residues; it reads QKPEGRQKPEEQQKPEGRQKPEGRQKP. Polar residues predominate over residues 653-667; it reads TQSQPHSGSLPSQTL.

Belongs to the vertnin family.

The protein resides in the nucleus. Its function is as follows. Acts as a transcription factor that regulates development of thoracic vertebrae. This is Vertnin (Vrtn) from Mus musculus (Mouse).